A 67-amino-acid polypeptide reads, in one-letter code: Large ribosomal subunit protein bL32 (67 aa).

Over residues 1–19 (MAVPKRKMSRSNTRARRSQ) the composition is skewed to basic residues. The tract at residues 1 to 21 (MAVPKRKMSRSNTRARRSQWK) is disordered.

This sequence belongs to the bacterial ribosomal protein bL32 family.

This is Large ribosomal subunit protein bL32 from Clavibacter sepedonicus (Clavibacter michiganensis subsp. sepedonicus).